Here is a 347-residue protein sequence, read N- to C-terminus: Melanoma-associated antigen B1 (347 aa).

Residues 1-17 (MPRGQKSKLRAREKRRK) are compositionally biased toward basic residues. Positions 1-104 (MPRGQKSKLR…QATTSTESSV (104 aa)) are disordered. Composition is skewed to polar residues over residues 39–53 (PSSSPVLGDTPTSSP) and 89–102 (ENASFSQATTSTES). The MAGE domain maps to 108–307 (VAWEAGMLMH…RDFPSHYEEA (200 aa)). The tract at residues 315 to 347 (AQVRSSVRARRRTTATTFRARSRAPFSRSSHPM) is disordered. Positions 328–347 (TATTFRARSRAPFSRSSHPM) are enriched in low complexity.

As to expression, expressed only in testis.

The polypeptide is Melanoma-associated antigen B1 (MAGEB1) (Homo sapiens (Human)).